The following is a 787-amino-acid chain: Aminodeoxychorismate synthase (787 aa).

The region spanning H16–K233 is the Glutamine amidotransferase type-1 domain. Active-site residues include C112, H207, and E209. Positions M304 to M787 are PABB component.

In the C-terminal section; belongs to the anthranilate synthase component I family.

The protein localises to the cytoplasm. It carries out the reaction chorismate + L-glutamine = 4-amino-4-deoxychorismate + L-glutamate. Its pathway is cofactor biosynthesis; tetrahydrofolate biosynthesis; 4-aminobenzoate from chorismate: step 1/2. Functionally, catalyzes the biosynthesis of 4-amino-4-deoxychorismate (ADC) from chorismate and glutamine. Required for the synthesis of 4-aminobenzoate (PABA), an important component in tetrahydrofolate biosynthesis. The chain is Aminodeoxychorismate synthase (ABZ1) from Saccharomyces cerevisiae (strain ATCC 204508 / S288c) (Baker's yeast).